A 465-amino-acid polypeptide reads, in one-letter code: Antithrombin-III (465 aa).

Positions 1–32 (MISNGIGTVTTGKRSMCLFPLLLIGLWGCVTC) are cleaved as a signal peptide. 2 disulfide bridges follow: Cys-41–Cys-161 and Cys-54–Cys-128. Thr-64 bears the Phosphothreonine mark. Ser-69 is modified (phosphoserine). Trp-82 is a heparin binding site. N-linked (GlcNAc...) asparagine glycosylation is present at Asn-129. Arg-162 is a heparin binding site. Asn-168 is a glycosylation site (N-linked (GlcNAc...) asparagine). Arg-178 contacts heparin. 2 N-linked (GlcNAc...) asparagine glycosylation sites follow: Asn-188 and Asn-225. An intrachain disulfide couples Cys-280 to Cys-463.

The protein belongs to the serpin family. Forms protease inhibiting heterodimer with TMPRSS7. In terms of processing, phosphorylated by FAM20C in the extracellular medium. In terms of tissue distribution, plasma.

The protein resides in the secreted. It is found in the extracellular space. In terms of biological role, most important serine protease inhibitor in plasma that regulates the blood coagulation cascade. AT-III inhibits thrombin, matriptase-3/TMPRSS7, as well as factors IXa, Xa and XIa. Its inhibitory activity is greatly enhanced in the presence of heparin. The protein is Antithrombin-III (SERPINC1) of Ovis aries (Sheep).